Consider the following 317-residue polypeptide: Long form salivary protein D7L2 (317 aa).

Residues 1 to 20 (MYKLLVALHLILCTVSHVKT) form the signal peptide. Disulfide bonds link cysteine 39/cysteine 76, cysteine 72/cysteine 131, cysteine 181/cysteine 214, cysteine 195/cysteine 316, and cysteine 255/cysteine 266. Thromboxane A2 is bound by residues tryptophan 58 and tyrosine 73. Serotonin is bound by residues glutamate 182, tyrosine 264, aspartate 281, aspartate 284, and methionine 308.

It belongs to the PBP/GOBP family. In terms of tissue distribution, female salivary gland.

Its subcellular location is the secreted. Functionally, modulates blood feeding of female mosquitoes on vertebrate species by binding and sequestering different mediators involved in the host response, such as biogenic amines and eicosanoids. Binds serotonin with high affinity. Binds tryptamine, octopamine, dopamine and noradrenaline with low affinity. Binds leukotriene C4, leukotriene D4, leukotriene E4 and U-46619, a stable analog of thromboxane A2. Does not bind leukotriene B4, adrenaline, histamine and ADP. Inhibits platelet aggregation induced by low concentrations of collagen and arachidonic acid but not by ADP or adrenaline. This Anopheles darlingi (Mosquito) protein is Long form salivary protein D7L2.